Consider the following 522-residue polypeptide: Semenogelin-2 (522 aa).

The N-terminal stretch at 1 to 23 is a signal peptide; it reads MKSIILFVLSLLLILEKQAAVMG. Disordered stretches follow at residues 26–62, 132–158, 272–358, and 379–522; these read CGSK…SKGS, GGQA…ISSQ, NLNQ…ERHL, and EEQI…PVST. Polar residues-rich tracts occupy residues 31–40 and 137–158; these read QLPSGSSQFP and RGTQ…ISSQ. Residues 292-310 show a composition bias toward basic and acidic residues; it reads RTEERQLNRGEKSVQKDVS. The segment covering 325 to 335 has biased composition (polar residues); the sequence is KSQNQVTIHSQ. Over residues 336–345 the composition is skewed to basic and acidic residues; the sequence is GQEHGHKENK. 3 stretches are compositionally biased toward polar residues: residues 379-397, 427-436, and 446-464; these read EEQI…SQAQ, KDVSQSSTSF, and SQIQ…QNAK. Composition is skewed to basic and acidic residues over residues 465–492 and 499–522; these read GKSD…ESSE and TEHE…PVST.

This sequence belongs to the semenogelin family. In terms of assembly, interacts with SERPINA5.

The protein resides in the secreted. In terms of biological role, participates in the formation of a gel matrix (sperm coagulum) entrapping the accessory gland secretions and ejaculated spermatozoa. The protein is Semenogelin-2 (SEMG2) of Hylobates klossii (Kloss's gibbon).